Here is a 502-residue protein sequence, read N- to C-terminus: Histidine--tRNA ligase (502 aa).

Belongs to the class-II aminoacyl-tRNA synthetase family. As to quaternary structure, homodimer.

The protein resides in the cytoplasm. It carries out the reaction tRNA(His) + L-histidine + ATP = L-histidyl-tRNA(His) + AMP + diphosphate + H(+). The polypeptide is Histidine--tRNA ligase (Brucella abortus (strain S19)).